A 334-amino-acid polypeptide reads, in one-letter code: Ornithine carbamoyltransferase (334 aa).

Carbamoyl phosphate-binding positions include 56–59 (STRT), Gln-83, Arg-107, and 134–137 (HPTQ). L-ornithine contacts are provided by residues Asn-168, Asp-232, and 236–237 (SM). Carbamoyl phosphate is bound by residues 274–275 (CL) and Arg-320.

Belongs to the aspartate/ornithine carbamoyltransferase superfamily. OTCase family. As to quaternary structure, homotrimer.

It is found in the cytoplasm. The catalysed reaction is carbamoyl phosphate + L-ornithine = L-citrulline + phosphate + H(+). The protein operates within amino-acid biosynthesis; L-arginine biosynthesis; L-arginine from L-ornithine and carbamoyl phosphate: step 1/3. Reversibly catalyzes the transfer of the carbamoyl group from carbamoyl phosphate (CP) to the N(epsilon) atom of ornithine (ORN) to produce L-citrulline. In Salmonella typhimurium (strain LT2 / SGSC1412 / ATCC 700720), this protein is Ornithine carbamoyltransferase (argI).